The chain runs to 337 residues: Cytoskeleton protein RodZ (337 aa).

The Cytoplasmic segment spans residues 1–111 (MNTEATHDQN…LGKRRKKRDG (111 aa)). Residues 19 to 71 (LRNAREQLGLSQQAVAERLCLKVSTVRDIEEDKAPADLASTFLRGYIRSYARL) enclose the HTH cro/C1-type domain. The segment at residues 30-49 (QQAVAERLCLKVSTVRDIEE) is a DNA-binding region (H-T-H motif). A helical; Signal-anchor for type II membrane protein membrane pass occupies residues 112–132 (WLMTFTWLVLFVVIGLSGAWW). At 133-337 (WQDHKAQQEE…TLNAEQSPAQ (205 aa)) the chain is on the periplasmic side. The span at 145–167 (TMADQSSAELSSNSEQGQSVPLN) shows a compositional bias: polar residues. The interval 145–236 (TMADQSSAEL…TAATTPDGAA (92 aa)) is disordered. Low complexity predominate over residues 168-207 (TSTTTDPATTSTPPASVDTTATNTQTPAVTAPAPAVDPQQ). The segment covering 208–218 (NAVVSPSQANV) has biased composition (polar residues). The span at 219-236 (DTAATPAPTAATTPDGAA) shows a compositional bias: low complexity.

This sequence belongs to the RodZ family.

It is found in the cell inner membrane. In terms of biological role, cytoskeletal protein that is involved in cell-shape control through regulation of the length of the long axis. This Escherichia coli O9:H4 (strain HS) protein is Cytoskeleton protein RodZ.